We begin with the raw amino-acid sequence, 383 residues long: Lipid-A-disaccharide synthase (383 aa).

This sequence belongs to the LpxB family.

The enzyme catalyses 2-N,3-O-bis[(3R)-3-hydroxytetradecanoyl]-alpha-D-glucosaminyl 1-phosphate + UDP-2-N,3-O-bis[(3R)-3-hydroxytetradecanoyl]-alpha-D-glucosamine = lipid A disaccharide (E. coli) + UDP + H(+). The catalysed reaction is a lipid X + a UDP-2-N,3-O-bis[(3R)-3-hydroxyacyl]-alpha-D-glucosamine = a lipid A disaccharide + UDP + H(+). The protein operates within glycolipid biosynthesis; lipid IV(A) biosynthesis; lipid IV(A) from (3R)-3-hydroxytetradecanoyl-[acyl-carrier-protein] and UDP-N-acetyl-alpha-D-glucosamine: step 5/6. Its function is as follows. Condensation of UDP-2,3-diacylglucosamine and 2,3-diacylglucosamine-1-phosphate to form lipid A disaccharide, a precursor of lipid A, a phosphorylated glycolipid that anchors the lipopolysaccharide to the outer membrane of the cell. The polypeptide is Lipid-A-disaccharide synthase (Pectobacterium carotovorum subsp. carotovorum (strain PC1)).